The primary structure comprises 389 residues: Oxytocin receptor (389 aa).

Positions 1 to 27 (MEGELAANWSTEAVNSSAAPPGAEGNC) are disordered. Residues 1 to 38 (MEGELAANWSTEAVNSSAAPPGAEGNCTAGPPRRNEAL) are Extracellular-facing. 3 N-linked (GlcNAc...) asparagine glycosylation sites follow: N8, N15, and N26. Positions 8-18 (NWSTEAVNSSA) are enriched in polar residues. A helical membrane pass occupies residues 39–63 (ARVEVAVLCLILFLALSGNACVLLA). The Cytoplasmic portion of the chain corresponds to 64-74 (LRTTRHKHSRL). Residues 75-97 (FFFMKHLSIADLVVAVFQVLPQL) form a helical membrane-spanning segment. Over 98–113 (LWDITFRFYGPDLLCR) the chain is Extracellular. An intrachain disulfide couples C112 to C187. A helical membrane pass occupies residues 114–135 (LVKYLQVVGMFASTYLLLLMSL). The Cytoplasmic segment spans residues 136–154 (DRCLAICQPLRSLRRRTDR). Residues 155 to 175 (LAVLATWLGCLVASAPQVHIF) traverse the membrane as a helical segment. Residues 176–202 (SLREVADGVFDCWAVFIQPWGPKAYIT) lie on the Extracellular side of the membrane. A helical membrane pass occupies residues 203-225 (WITLAVYIVPVIVLAACYGLISF). The Cytoplasmic portion of the chain corresponds to 226 to 275 (KIWQNLRLKTAAAAAAEAPEGAAAGDGGRMALARVSSVKLISKAKIRTVK). A helical transmembrane segment spans residues 276-294 (MTFIIVLAFIVCWTPFFFV). Topologically, residues 295 to 309 (QMWSVWDANAPKEAS) are extracellular. A helical membrane pass occupies residues 310-332 (AFIIVMLLASLNSCCNPWIYMLF). Residues 333–389 (TGHLFHELVQRFLCCSASYLKGNRLGETSTSKKSNSSSFVLSHRSSSQRSCSQPSTA) lie on the Cytoplasmic side of the membrane. Positions 358 to 389 (GETSTSKKSNSSSFVLSHRSSSQRSCSQPSTA) are disordered. Residues 360–389 (TSTSKKSNSSSFVLSHRSSSQRSCSQPSTA) are compositionally biased toward low complexity. Phosphoserine occurs at positions 366 and 368.

It belongs to the G-protein coupled receptor 1 family. Vasopressin/oxytocin receptor subfamily.

It localises to the cell membrane. In terms of biological role, receptor for oxytocin. The activity of this receptor is mediated by G proteins which activate a phosphatidylinositol-calcium second messenger system. The chain is Oxytocin receptor (OXTR) from Macaca mulatta (Rhesus macaque).